Reading from the N-terminus, the 46-residue chain is Diuretic hormone class 1 (46 aa).

Isoleucine 46 bears the Isoleucine amide mark.

It localises to the secreted. Functionally, regulation of fluid secretion. Stimulates primary urine secretion by Malpighian tubules and causes a dose-dependent stimulation of cAMP levels in the tubules. Has a greater effect on the transport of Na(+) then K(+) ions. In vitro, has synergistic effects with the smaller diuretic hormone DH(31) which co-occurs with it. The sequence is that of Diuretic hormone class 1 from Diploptera punctata (Pacific beetle cockroach).